Here is a 255-residue protein sequence, read N- to C-terminus: Kallikrein-4 (255 aa).

An N-terminal signal peptide occupies residues 1–25 (MMVTARTPWGWFLGCLILEVTGASA). Positions 26–31 (SSVSSR) are excised as a propeptide. Residues 32–253 (IIQGQDCSPH…FTNWIQTIIQ (222 aa)) form the Peptidase S1 domain. His-41 is a Zn(2+) binding site. A disulfide bond links Cys-57 and Cys-73. His-72 functions as the Charge relay system in the catalytic mechanism. Position 92 (Glu-92) interacts with Zn(2+). The active-site Charge relay system is the Asp-117. 2 N-linked (GlcNAc...) asparagine glycosylation sites follow: Asn-124 and Asn-170. Disulfide bonds link Cys-149–Cys-214, Cys-179–Cys-193, and Cys-204–Cys-229. The Charge relay system role is filled by Ser-208.

This sequence belongs to the peptidase S1 family. Kallikrein subfamily. Post-translationally, N-glycosylated. The N-glycan structures are of complex diantennary or triantennary type, which may be further modified with up to 2 sialic acid residues.

The protein localises to the secreted. Functionally, has a major role in enamel formation. Required during the maturation stage of tooth development for clearance of enamel proteins and normal structural patterning of the crystalline matrix. The chain is Kallikrein-4 from Mus musculus (Mouse).